A 178-amino-acid polypeptide reads, in one-letter code: Large ribosomal subunit protein eL20 (178 aa).

This sequence belongs to the eukaryotic ribosomal protein eL20 family.

The sequence is that of Large ribosomal subunit protein eL20 (RPL18A) from Castanea sativa (Sweet chestnut).